A 434-amino-acid polypeptide reads, in one-letter code: Protein translocase subunit SecY (434 aa).

10 helical membrane-spanning segments follow: residues 19 to 39 (LFTL…IPGI), 73 to 93 (IFML…LLVY), 117 to 137 (YLTI…AKGI), 148 to 168 (YIFV…WFGE), 179 to 199 (TSLI…FNLF), 209 to 229 (VNPV…ILII), 264 to 284 (VLPV…LSGF), 300 to 320 (PNGF…TYFY), 362 to 382 (FSGS…QNIF), and 391 to 411 (IMGG…LIHI).

It belongs to the SecY/SEC61-alpha family. Component of the Sec protein translocase complex. Heterotrimer consisting of SecY, SecE and SecG subunits. The heterotrimers can form oligomers, although 1 heterotrimer is thought to be able to translocate proteins. Interacts with the ribosome. Interacts with SecDF, and other proteins may be involved. Interacts with SecA.

It localises to the cell inner membrane. In terms of biological role, the central subunit of the protein translocation channel SecYEG. Consists of two halves formed by TMs 1-5 and 6-10. These two domains form a lateral gate at the front which open onto the bilayer between TMs 2 and 7, and are clamped together by SecE at the back. The channel is closed by both a pore ring composed of hydrophobic SecY resides and a short helix (helix 2A) on the extracellular side of the membrane which forms a plug. The plug probably moves laterally to allow the channel to open. The ring and the pore may move independently. This chain is Protein translocase subunit SecY, found in Borreliella burgdorferi (strain ATCC 35210 / DSM 4680 / CIP 102532 / B31) (Borrelia burgdorferi).